The primary structure comprises 256 residues: Imidazole glycerol phosphate synthase subunit HisF (256 aa).

Catalysis depends on residues Asp-11 and Asp-130.

Belongs to the HisA/HisF family. Heterodimer of HisH and HisF.

Its subcellular location is the cytoplasm. The enzyme catalyses 5-[(5-phospho-1-deoxy-D-ribulos-1-ylimino)methylamino]-1-(5-phospho-beta-D-ribosyl)imidazole-4-carboxamide + L-glutamine = D-erythro-1-(imidazol-4-yl)glycerol 3-phosphate + 5-amino-1-(5-phospho-beta-D-ribosyl)imidazole-4-carboxamide + L-glutamate + H(+). It functions in the pathway amino-acid biosynthesis; L-histidine biosynthesis; L-histidine from 5-phospho-alpha-D-ribose 1-diphosphate: step 5/9. Functionally, IGPS catalyzes the conversion of PRFAR and glutamine to IGP, AICAR and glutamate. The HisF subunit catalyzes the cyclization activity that produces IGP and AICAR from PRFAR using the ammonia provided by the HisH subunit. This Cupriavidus necator (strain ATCC 17699 / DSM 428 / KCTC 22496 / NCIMB 10442 / H16 / Stanier 337) (Ralstonia eutropha) protein is Imidazole glycerol phosphate synthase subunit HisF.